Here is a 524-residue protein sequence, read N- to C-terminus: G1/S-specific cyclin-E (524 aa).

The tract at residues 1–155 (MAGRKSSRTA…EESHEMVRLE (155 aa)) is disordered. Basic and acidic residues predominate over residues 18-47 (KPERKSAILSPHDELRERLLETAIDMKENI). Polar residues predominate over residues 48 to 62 (PQRNTRNSSVGSQKS). 3 stretches are compositionally biased toward basic and acidic residues: residues 63–78 (DCSETRKRRSTKEGPA), 86–95 (KHRNGSREDS), and 146–155 (EESHEMVRLE).

Belongs to the cyclin family. Cyclin E subfamily. Interacts with a member of the CDK2/CDK protein kinases to form a serine/threonine kinase holoenzyme complex. The cyclin subunit imparts substrate specificity to the complex. Expressed dynamically in proliferating cells throughout development. Detectable in larval blast cells undergoing active proliferation that give rise to all tissue types, including germline, intestine, hypodermis, neurons, and muscle.

The protein localises to the nucleus. It localises to the cytoplasm. Its subcellular location is the cytoskeleton. It is found in the microtubule organizing center. The protein resides in the centrosome. The protein localises to the centriole. Its function is as follows. Essential for the control of the cell cycle at the G1/S (start) transition. In association with cdk-2, regulates proliferation, quiescent state and cell fate during the development of several cell lineages. In the embryo, initiates the establishment of cell polarity through the recruitment of the centrosomal proteins spd-2 and spd-5 during prophase. During the development of the vulva, controls the onset of vulval cell terminal differentiation by controlling the duration of G1 phase. During hypoderm development at early larval stages, controls syncytial fate of seam cell daughter cells. Involved in the progression of cell division in the intestinal lineage in larvae, and in particular in endoreplication, a specific growth pathway in the intestinal epithelium, required for feeding and gut development in growing larvae. By controlling the activity of translational repressor gld-1, regulates the pool of germline stem cells and the size of the mitotic zone by preventing entry into meiosis. In addition, repression of expression by gld-1 prevents mitosis re-entry in meiotic germline cells. This chain is G1/S-specific cyclin-E, found in Caenorhabditis elegans.